An 837-amino-acid chain; its full sequence is MAKHDVTVMTLLLVVCALHVFDAQGTDVKLNDGFLRSGIMNIPFQRRVSPKYGHNFVGKRSGFQSPVSPSDYFIPDELNDEDESPNMDTYALFRELLGEYPSSELSDDDVIRPYPVVPWAWDRFENKRFSKENEKRGSPGFSHSFVGKRMDLSALEKELIAKLKAADLLSPLETEAPGKRRLPSYGHSFLGKRMPVDVFPRAIPSYSHNFVGKRSGNGENYFDDLDTFGDISQRADLGFTHSFVGKRGNTDFSRNPLARLSQVQNRAIPNFVHKFVGKRSVHNIVKRSSPFYGHNFVGKRDFEDASEGLDEEEGDIDGYSDDLDVKRVPGYSHSFVGKRIPGYSHSFVGKRTPGYSHSFVGKRVPGYSHSFVGKRVPGYSHSFVGKRVPGYSHSFVGKRVPGYSHSFVGKRVPGYSHSFVGKRTPGYSHSFVGKRAPGYSHSFVGKRTPGYSHSFVGKRAPGYSHSFVGKRAPGYSHSFVGKRAPGYSHSFVGKRVPGYSHSFVGKRAPGYSHSFVGKRVPGYSHSFVGKRAPGYSHSFVGKRELGEDEINFLKEVDAADISRQLAEEDEKEAMVSVDDKETLSNEEDASEDDFEKRELNFQHAFVGKKDEEGDMGVEMEEEMESEKGQPGYGNAFLGKRQPSYGHSFVGKRQPGYSHSFVGKRVPSFGHSFVGKRQPSYTHAFVGKRDPGFNHAFVGKRQPSFGHSFVGKRQPSFTHAFVGKRQPSFGHSFVGKRSGAEDIDNTFTDNFVVKGSDPLEDVLDFYSDSQLIGQPAAANEEELQQEAAEESENQTGTKQLDDKSNVPASSLGDDLPSPVSLSKQEDAEDSHIMATSST.

Positions 1 to 25 are cleaved as a signal peptide; that stretch reads MAKHDVTVMTLLLVVCALHVFDAQG. The propeptide occupies 26–47; that stretch reads TDVKLNDGFLRSGIMNIPFQRR. V57 is subject to Valine amide. A propeptide spanning residues 61–134 is cleaved from the precursor; sequence SGFQSPVSPS…ENKRFSKENE (74 aa). V146 is subject to Valine amide. Positions 150 to 178 are excised as a propeptide; the sequence is MDLSALEKELIAKLKAADLLSPLETEAPG. Residue L190 is modified to Leucine amide. Residues 194–201 constitute a propeptide that is removed on maturation; it reads MPVDVFPR. V211 carries the post-translational modification Valine amide. The propeptide occupies 215–234; sequence SGNGENYFDDLDTFGDISQR. Position 244 is a valine amide (V244). The propeptide occupies 248–266; the sequence is GNTDFSRNPLARLSQVQNR. A Valine amide modification is found at V276. The propeptide occupies 280–285; the sequence is SVHNIV. Residue V297 is modified to Valine amide. Residues 301–325 constitute a propeptide that is removed on maturation; that stretch reads DFEDASEGLDEEEGDIDGYSDDLDV. Residues V336, V348, V360, V372, V384, V396, V408, V420, V432, V444, V456, V468, V480, V492, V504, V516, V528, and V540 each carry the valine amide modification. The propeptide occupies 544-595; sequence ELGEDEINFLKEVDAADISRQLAEEDEKEAMVSVDDKETLSNEEDASEDDFE. The interval 567 to 594 is disordered; sequence EEDEKEAMVSVDDKETLSNEEDASEDDF. Acidic residues predominate over residues 584–593; the sequence is SNEEDASEDD. E598 bears the Pyrrolidone carboxylic acid (Glu); in form ENl' mark. The residue at position 606 (V606) is a Valine amide. The propeptide occupies 610-627; the sequence is DEEGDMGVEMEEEMESEK. At L637 the chain carries Leucine amide. Q641 carries the pyrrolidone carboxylic acid modification. V649 is subject to Valine amide. Q653 is modified (pyrrolidone carboxylic acid). 2 positions are modified to valine amide: V661 and V673. A Pyrrolidone carboxylic acid modification is found at Q677. Residues V685 and V697 each carry the valine amide modification. Residue Q701 is modified to Pyrrolidone carboxylic acid. V709 is subject to Valine amide. Q713 bears the Pyrrolidone carboxylic acid mark. A Valine amide modification is found at V721. Position 725 is a pyrrolidone carboxylic acid (Q725). V733 carries the post-translational modification Valine amide. Positions 734 to 837 are excised as a propeptide; it reads GKRSGAEDID…DSHIMATSST (104 aa). Positions 772-837 are disordered; sequence GQPAAANEEE…DSHIMATSST (66 aa). Acidic residues predominate over residues 778–791; the sequence is NEEELQQEAAEESE.

High expression in gut and CNS.

The protein resides in the secreted. Its function is as follows. Reduce interneurons B4/5 activity. May play a regulatory role in nonfeeding behaviors. In Aplysia californica (California sea hare), this protein is Enterin neuropeptides (ENPP).